We begin with the raw amino-acid sequence, 327 residues long: Glycerol-3-phosphate dehydrogenase [NAD(P)+] (327 aa).

Residues tryptophan 13, histidine 33, and lysine 102 each coordinate NADPH. The sn-glycerol 3-phosphate site is built by lysine 102, glycine 130, and serine 132. Alanine 134 provides a ligand contact to NADPH. Sn-glycerol 3-phosphate-binding residues include lysine 185, aspartate 238, serine 248, arginine 249, and asparagine 250. The Proton acceptor role is filled by lysine 185. Arginine 249 is an NADPH binding site. An NADPH-binding site is contributed by glutamate 275.

Belongs to the NAD-dependent glycerol-3-phosphate dehydrogenase family.

It localises to the cytoplasm. The catalysed reaction is sn-glycerol 3-phosphate + NAD(+) = dihydroxyacetone phosphate + NADH + H(+). It catalyses the reaction sn-glycerol 3-phosphate + NADP(+) = dihydroxyacetone phosphate + NADPH + H(+). It functions in the pathway membrane lipid metabolism; glycerophospholipid metabolism. Its function is as follows. Catalyzes the reduction of the glycolytic intermediate dihydroxyacetone phosphate (DHAP) to sn-glycerol 3-phosphate (G3P), the key precursor for phospholipid synthesis. The protein is Glycerol-3-phosphate dehydrogenase [NAD(P)+] of Vesicomyosocius okutanii subsp. Calyptogena okutanii (strain HA).